The sequence spans 103 residues: Flagellar hook-basal body complex protein FliE (103 aa).

Belongs to the FliE family.

It localises to the bacterial flagellum basal body. The sequence is that of Flagellar hook-basal body complex protein FliE from Photorhabdus laumondii subsp. laumondii (strain DSM 15139 / CIP 105565 / TT01) (Photorhabdus luminescens subsp. laumondii).